The following is a 101-amino-acid chain: Protein PrgJ (101 aa).

The protein to S.flexneri MxiI.

Functionally, required for invasion of epithelial cells. The chain is Protein PrgJ (prgJ) from Salmonella typhimurium (strain LT2 / SGSC1412 / ATCC 700720).